A 130-amino-acid chain; its full sequence is Glycoprotein hormone beta-5 (130 aa).

A signal peptide spans 1–24 (MKLAFLFLGPMALLLLAGYGCVLG). Cystine bridges form between Cys-36–Cys-84, Cys-50–Cys-99, Cys-60–Cys-115, Cys-64–Cys-117, and Cys-120–Cys-127. Asn-87 is a glycosylation site (N-linked (GlcNAc...) asparagine).

The protein belongs to the glycoprotein hormones subunit beta family. As to quaternary structure, heterodimer with GPHA2; this heterodimer interacts with thyroid-stimulating hormone receptor (TSHR), and hence stimulates cAMP production. Post-translationally, N-glycosylated. As to expression, highly expressed in brain and at low levels in pituitary. Also found in retina, testis and skin but not in pancreas, parotid, kidney, stomach, liver, colon, small intestine, thyroid, brain or adrenal gland. In pituitary, colocalizes with ACTH, suggesting that it is located in corticotrophs.

Its subcellular location is the secreted. Functionally, functions as a heterodimeric glycoprotein hormone with GPHA2 able to bind and activate the thyroid-stimulating hormone receptor (TSHR), leading to increased cAMP production. Plays a central role in controlling thyroid cell metabolism. The sequence is that of Glycoprotein hormone beta-5 (GPHB5) from Homo sapiens (Human).